Reading from the N-terminus, the 591-residue chain is Dihydroxyacetone kinase 2 (591 aa).

The 337-residue stretch at 8 to 344 (SDGNIVTPYL…FDYPTTASGW (337 aa)) folds into the DhaK domain. A disordered region spans residues 40–59 (ASAPNSGNPPKVSLVSGGGS). Substrate-binding positions include 58-61 (GSGH), K109, and D114. H223 serves as the catalytic Tele-hemiaminal-histidine intermediate. Residues 384 to 587 (DTFAKILLAG…LAALLDGFVT (204 aa)) enclose the DhaL domain. ATP-binding positions include 413–416 (DGDC), 459–460 (TS), 511–512 (TL), and 572–574 (DPG).

It belongs to the dihydroxyacetone kinase (DAK) family.

It carries out the reaction dihydroxyacetone + ATP = dihydroxyacetone phosphate + ADP + H(+). It catalyses the reaction D-glyceraldehyde + ATP = D-glyceraldehyde 3-phosphate + ADP + H(+). It participates in polyol metabolism; glycerol fermentation; glycerone phosphate from glycerol (oxidative route): step 2/2. Functionally, catalyzes both the phosphorylation of dihydroxyacetone and of glyceraldehyde. The sequence is that of Dihydroxyacetone kinase 2 (DAK2) from Saccharomyces cerevisiae (strain ATCC 204508 / S288c) (Baker's yeast).